Consider the following 198-residue polypeptide: uncharacterized protein (198 aa).

This is an uncharacterized protein from Bacillus subtilis (strain 168).